The sequence spans 203 residues: Holliday junction branch migration complex subunit RuvA (203 aa).

The interval 1-63 (MIGQLSGKVD…EEHIHLYGFL (63 aa)) is domain I. Residues 64–142 (NLEEKIFFNL…KISSGSAIIK (79 aa)) form a domain II region. The flexible linker stretch occupies residues 143–149 (ESLNIKH). Positions 150 to 203 (ITPVASNEVIKALVNLGFSRFEAQNAVQGIITQNPEISIDELIKTALKNRNSNF) are domain III.

The protein belongs to the RuvA family. In terms of assembly, homotetramer. Forms an RuvA(8)-RuvB(12)-Holliday junction (HJ) complex. HJ DNA is sandwiched between 2 RuvA tetramers; dsDNA enters through RuvA and exits via RuvB. An RuvB hexamer assembles on each DNA strand where it exits the tetramer. Each RuvB hexamer is contacted by two RuvA subunits (via domain III) on 2 adjacent RuvB subunits; this complex drives branch migration. In the full resolvosome a probable DNA-RuvA(4)-RuvB(12)-RuvC(2) complex forms which resolves the HJ.

The protein resides in the cytoplasm. The RuvA-RuvB-RuvC complex processes Holliday junction (HJ) DNA during genetic recombination and DNA repair, while the RuvA-RuvB complex plays an important role in the rescue of blocked DNA replication forks via replication fork reversal (RFR). RuvA specifically binds to HJ cruciform DNA, conferring on it an open structure. The RuvB hexamer acts as an ATP-dependent pump, pulling dsDNA into and through the RuvAB complex. HJ branch migration allows RuvC to scan DNA until it finds its consensus sequence, where it cleaves and resolves the cruciform DNA. This chain is Holliday junction branch migration complex subunit RuvA, found in Rickettsia africae (strain ESF-5).